A 170-amino-acid chain; its full sequence is 6,7-dimethyl-8-ribityllumazine synthase (170 aa).

Residues tryptophan 25, 57 to 59 (AVE), and 79 to 81 (AVI) contribute to the 5-amino-6-(D-ribitylamino)uracil site. 84-85 (DT) is a binding site for (2S)-2-hydroxy-3-oxobutyl phosphate. Histidine 87 functions as the Proton donor in the catalytic mechanism. Asparagine 112 provides a ligand contact to 5-amino-6-(D-ribitylamino)uracil. Arginine 126 contributes to the (2S)-2-hydroxy-3-oxobutyl phosphate binding site.

Belongs to the DMRL synthase family.

The enzyme catalyses (2S)-2-hydroxy-3-oxobutyl phosphate + 5-amino-6-(D-ribitylamino)uracil = 6,7-dimethyl-8-(1-D-ribityl)lumazine + phosphate + 2 H2O + H(+). It functions in the pathway cofactor biosynthesis; riboflavin biosynthesis; riboflavin from 2-hydroxy-3-oxobutyl phosphate and 5-amino-6-(D-ribitylamino)uracil: step 1/2. Functionally, catalyzes the formation of 6,7-dimethyl-8-ribityllumazine by condensation of 5-amino-6-(D-ribitylamino)uracil with 3,4-dihydroxy-2-butanone 4-phosphate. This is the penultimate step in the biosynthesis of riboflavin. The polypeptide is 6,7-dimethyl-8-ribityllumazine synthase (Thermobifida fusca (strain YX)).